The following is a 779-amino-acid chain: MYFWVMFFTLMIKVKLYITNGDIFQNRPTVYVVYLGANRLKNAALASSHHLHLLSKVFTSKDDAEQSMLYSYNNGFLGFSAKLNSTQAASLAKLNQVITVFKSKSLKLHTTRSWDFLGLAVDNARRTPPPQLAYGSDIVVGIFDTGIWPESESFRETPEAKPIPSSWNGKCVGGEDFDPSVHCNRKLIGARFYLRGFEETYGTIDFTRDPEYRSPRDYLGHGTHTASTAVGSVVRNVSGFFGLGRGTARGGAPLARLAVFKTCWGKDLEGVCTEADILAAFDDAIHDGVHVISASFGYSPPLSPFFESSADIGAFHAAERGISVVFSTGNDGPDPGVVQNVAPWAVSVAASTVDRSFPTRIVIDGSFTLTGQSLISQEITGTLALATTYFNGGVCKWENWMKKLANETIILCFSTLGPVQFIEEAQAAAIRANALALIFAASPTRQLAEEVDMIPTVRVDILHGTRIRNYLARSPTVPMVKIGPSKTVIGETTAPSVAYFSSRGPSSLSPDILKPDITAPGIGILAAWPPRTPPTLLPGDHRSIEWNFQSGTSMSCPHVAGVMALLQSAHPDWSPSAIRSAIMTTAYTRDTSYDLILSGGSMKSTDPFDIGAGHINPLKAMDPGLVYNTRTDDYVLFMCNIGYTDQEIKSMVLHPEPSTTCLPSHSYRTNADFNYPSITIPSLRLTRTIKRTVSNVGPNKNTVYFVDIIRPVGVEVLIWPRILVFSKCQQEHSYYVTFKPTEIFSGRYVFGEIMWTNGLHRVRSPVVVFLSNAGFLASS.

The N-terminal stretch at 1 to 21 (MYFWVMFFTLMIKVKLYITNG) is a signal peptide. Positions 22 to 109 (DIFQNRPTVY…VFKSKSLKLH (88 aa)) are cleaved as a propeptide — activation peptide. Residues 30 to 109 (VYVVYLGANR…VFKSKSLKLH (80 aa)) enclose the Inhibitor I9 domain. N-linked (GlcNAc...) asparagine glycosylation occurs at asparagine 84. Residues 113–621 (SWDFLGLAVD…AGHINPLKAM (509 aa)) form the Peptidase S8 domain. Residues aspartate 144 and histidine 221 each act as charge relay system in the active site. Residues asparagine 236 and asparagine 406 are each glycosylated (N-linked (GlcNAc...) asparagine). Serine 553 (charge relay system) is an active-site residue.

Belongs to the peptidase S8 family.

The protein localises to the secreted. The chain is Subtilisin-like protease SBT3.18 from Arabidopsis thaliana (Mouse-ear cress).